A 237-amino-acid polypeptide reads, in one-letter code: Leucyl/phenylalanyl-tRNA--protein transferase (237 aa).

Belongs to the L/F-transferase family.

The protein resides in the cytoplasm. It carries out the reaction N-terminal L-lysyl-[protein] + L-leucyl-tRNA(Leu) = N-terminal L-leucyl-L-lysyl-[protein] + tRNA(Leu) + H(+). It catalyses the reaction N-terminal L-arginyl-[protein] + L-leucyl-tRNA(Leu) = N-terminal L-leucyl-L-arginyl-[protein] + tRNA(Leu) + H(+). The catalysed reaction is L-phenylalanyl-tRNA(Phe) + an N-terminal L-alpha-aminoacyl-[protein] = an N-terminal L-phenylalanyl-L-alpha-aminoacyl-[protein] + tRNA(Phe). Its function is as follows. Functions in the N-end rule pathway of protein degradation where it conjugates Leu, Phe and, less efficiently, Met from aminoacyl-tRNAs to the N-termini of proteins containing an N-terminal arginine or lysine. This Photobacterium profundum (strain SS9) protein is Leucyl/phenylalanyl-tRNA--protein transferase.